Consider the following 1485-residue polypeptide: Chromosome partition protein MukB (1485 aa).

34–41 (GGNGAGKS) provides a ligand contact to ATP. Coiled-coil stretches lie at residues 337-480 (LNLV…QAYQ) and 509-605 (QHLA…PVWL). The segment at 666-783 (PSGAEDARLI…EVPLFGRAAR (118 aa)) is flexible hinge. 2 coiled-coil regions span residues 835-915 (EAEI…IQQH) and 977-1116 (GMLT…AKAG).

Belongs to the SMC family. MukB subfamily. As to quaternary structure, homodimerization via its hinge domain. Binds to DNA via its C-terminal region. Interacts, and probably forms a ternary complex, with MukE and MukF via its C-terminal region. The complex formation is stimulated by calcium or magnesium. Interacts with tubulin-related protein FtsZ.

The protein resides in the cytoplasm. It is found in the nucleoid. Functionally, plays a central role in chromosome condensation, segregation and cell cycle progression. Functions as a homodimer, which is essential for chromosome partition. Involved in negative DNA supercoiling in vivo, and by this means organize and compact chromosomes. May achieve or facilitate chromosome segregation by condensation DNA from both sides of a centrally located replisome during cell division. The sequence is that of Chromosome partition protein MukB from Yersinia pseudotuberculosis serotype IB (strain PB1/+).